A 71-amino-acid chain; its full sequence is Serine palmitoyltransferase small subunit A (71 aa).

At 1 to 12 (MAGMALARAWKQ) the chain is on the cytoplasmic side. The chain crosses the membrane as a helical span at residues 13–29 (MSWFYYQYLLVTALYML). Over 30–34 (EPWER) the chain is Lumenal. A helical membrane pass occupies residues 35–57 (TVFNSMLVSIVGMALYTGYVFMP). Residues 58–71 (QHIMAILHYFEIVQ) are Cytoplasmic-facing.

It belongs to the SPTSS family. SPTSSA subfamily. In terms of assembly, component of the serine palmitoyltransferase (SPT) complex, which is composed of SPTLC1, SPTLC2 or SPTLC3 and SPTSSA or SPTSSB. The heterodimer consisting of SPTLC1 and SPTLC2/SPTLC3 forms the catalytic core of the enzyme, while SPTSSA or SPTSSB subunits determine substrate specificity. SPT also interacts with ORMDL proteins, especially ORMDL3, which negatively regulate SPT activity in the presence of ceramides. Interacts with MBOAT7; the interaction plays a role in MBOAT7 localization to mitochondria-associated membranes.

It localises to the endoplasmic reticulum membrane. The protein operates within lipid metabolism; sphingolipid metabolism. Its function is as follows. Component of the serine palmitoyltransferase multisubunit enzyme (SPT) that catalyzes the initial and rate-limiting step in sphingolipid biosynthesis by condensing L-serine and activated acyl-CoA (most commonly palmitoyl-CoA) to form long-chain bases. The SPT complex is composed of SPTLC1, SPTLC2 or SPTLC3 and SPTSSA or SPTSSB. Within this complex, the heterodimer consisting of SPTLC1 and SPTLC2/SPTLC3 forms the catalytic core. Within the SPT complex, SPTSSA stimulates the catalytic activity and plays a role in substrate specificity, which depends upon the overall complex composition. The SPTLC1-SPTLC2-SPTSSA complex shows a strong preference for C16-CoA substrate, while the SPTLC1-SPTLC3-SPTSSA isozyme uses both C14-CoA and C16-CoA as substrates, with a slight preference for C14-CoA. Independently of its action as a SPT component, may be involved in MBOAT7 localization to mitochondria-associated membranes, a membrane bridge between the endoplasmic reticulum and mitochondria, may hence affect MBOAT7-catalyzed incorporation of arachidonic acid into phosphatidylinositol. The protein is Serine palmitoyltransferase small subunit A of Homo sapiens (Human).